The sequence spans 284 residues: Isopentenyl-diphosphate delta-isomerase (284 aa).

A substrate-binding site is contributed by Lys-77. 2 residues coordinate Mg(2+): His-81 and His-92. In terms of domain architecture, Nudix hydrolase spans 90–256 (LLHRAFSVFL…SLVFTPWFKL (167 aa)). Arg-111 and Lys-115 together coordinate substrate. Cys-127 is a catalytic residue. Ser-128 serves as a coordination point for substrate. Positions 128–172 (SHPLCVPSELGVDSSLEGSKDVNNLTNAVKGAKVAAQRKLEHELG) match the Nudix box motif. Mg(2+) contacts are provided by Glu-204 and Glu-206. Residue Glu-206 is part of the active site.

It belongs to the IPP isomerase type 1 family. It depends on Mg(2+) as a cofactor.

Its subcellular location is the cytoplasm. It catalyses the reaction isopentenyl diphosphate = dimethylallyl diphosphate. Its pathway is isoprenoid biosynthesis; dimethylallyl diphosphate biosynthesis; dimethylallyl diphosphate from isopentenyl diphosphate: step 1/1. In terms of biological role, isopentenyl-diphosphate delta-isomerase; part of the second module of ergosterol biosynthesis pathway that includes the middle steps of the pathway. IDI1 catalyzes the 1,3-allylic rearrangement of isopentenyl (IPP) to its highly electrophilic allylic isomer, dimethylallyl diphosphate (DMAPP). The second module is carried out in the vacuole and involves the formation of farnesyl diphosphate, which is also an important intermediate in the biosynthesis of ubiquinone, dolichol, heme and prenylated proteins. Activity by the mevalonate kinase ERG12 first converts mevalonate into 5-phosphomevalonate. 5-phosphomevalonate is then further converted to 5-diphosphomevalonate by the phosphomevalonate kinase ERG8. The diphosphomevalonate decarboxylase MVD then produces isopentenyl diphosphate. The isopentenyl-diphosphate delta-isomerase IDI1 then catalyzes the 1,3-allylic rearrangement of the homoallylic substrate isopentenyl (IPP) to its highly electrophilic allylic isomer, dimethylallyl diphosphate (DMAPP). Finally the farnesyl diphosphate synthase ERG20 catalyzes the sequential condensation of isopentenyl pyrophosphate with dimethylallyl pyrophosphate, and then with the resultant geranylpyrophosphate to the ultimate product farnesyl pyrophosphate. The sequence is that of Isopentenyl-diphosphate delta-isomerase from Candida albicans (strain SC5314 / ATCC MYA-2876) (Yeast).